We begin with the raw amino-acid sequence, 181 residues long: MFQMENRNDELFIKLDSSIKSLLRSAREFKKENESISNVLLQLAEMLDNIDKTLEIIEKNFQIILKNRESGKFSNNEIIQKFVKPLENLIKVIENIESTSNNLKNEIENCASSIPTLKEITDKLKIINMESATQAIEEFKIAYDMLEDNRKNLDELIEKTKILKDKLKNLLLQIDNFLNEH.

This is an uncharacterized protein from Methanocaldococcus jannaschii (strain ATCC 43067 / DSM 2661 / JAL-1 / JCM 10045 / NBRC 100440) (Methanococcus jannaschii).